The chain runs to 248 residues: Probable transcriptional regulatory protein PSPTO_3980 (248 aa).

Belongs to the TACO1 family.

It localises to the cytoplasm. The polypeptide is Probable transcriptional regulatory protein PSPTO_3980 (Pseudomonas syringae pv. tomato (strain ATCC BAA-871 / DC3000)).